The chain runs to 400 residues: Carnosine N-methyltransferase (400 aa).

Residues 1 to 49 (MQRRRRAPPASQPAQDSGHSEEVEVQFSAGRLGSAAPAGPPVRGTAEDE) form a disordered region. Positions 155, 158, 199, 220, 286, 287, and 303 each coordinate S-adenosyl-L-methionine. D307 is a carnosine binding site. Y315 is an S-adenosyl-L-methionine binding site. Residues H338 and Y389 each contribute to the carnosine site.

The protein belongs to the carnosine N-methyltransferase family. Homodimer. Each monomer accommodates one molecule of carnosine in its active pocket, precisely anchoring the histidine imidazole ring such that only N1 is exposed and deprotonated for methylation. As to expression, expressed at higher level in skeletal muscle compared to other tissues.

It localises to the cytoplasm. It is found in the cytosol. The protein localises to the nucleus. It carries out the reaction carnosine + S-adenosyl-L-methionine = anserine + S-adenosyl-L-homocysteine + H(+). In terms of biological role, N-methyltransferase that catalyzes the formation of anserine (beta-alanyl-N(Pi)-methyl-L-histidine) from carnosine. Anserine, a methylated derivative of carnosine (beta-alanyl-L-histidine), is an abundant constituent of vertebrate skeletal muscles. Also methylates other L-histidine-containing di- and tripeptides such as Gly-Gly-His, Gly-His and homocarnosine (GABA-His). This chain is Carnosine N-methyltransferase, found in Rattus norvegicus (Rat).